The chain runs to 144 residues: Transcription antitermination protein NusB (144 aa).

It belongs to the NusB family.

In terms of biological role, involved in transcription antitermination. Required for transcription of ribosomal RNA (rRNA) genes. Binds specifically to the boxA antiterminator sequence of the ribosomal RNA (rrn) operons. This Histophilus somni (strain 2336) (Haemophilus somnus) protein is Transcription antitermination protein NusB.